We begin with the raw amino-acid sequence, 494 residues long: Alpha-amylase 1 (494 aa).

A signal peptide spans M1–A18. Residues C46 and C102 are joined by a disulfide bond. Ca(2+) contacts are provided by N116, R165, and D174. C153 and C167 are oxidised to a cystine. R202 is a binding site for chloride. The active-site Nucleophile is the D204. H208 is a Ca(2+) binding site. The Proton donor role is filled by E241. Chloride is bound by residues N304 and R343. Positions F350–F370 are disordered. The segment covering T351–Q363 has biased composition (low complexity). Disulfide bonds link C376–C382 and C448–C460.

It belongs to the glycosyl hydrolase 13 family. Monomer. Ca(2+) is required as a cofactor. It depends on chloride as a cofactor.

The enzyme catalyses Endohydrolysis of (1-&gt;4)-alpha-D-glucosidic linkages in polysaccharides containing three or more (1-&gt;4)-alpha-linked D-glucose units.. The polypeptide is Alpha-amylase 1 (Amy35) (Drosophila ananassae (Fruit fly)).